Consider the following 113-residue polypeptide: U11-theraphotoxin-Hhn1a (113 aa).

An N-terminal signal peptide occupies residues 1–21 (MNTVRVTFLLVFVLAVSLGRA). Residues 22-74 (DKDENRMEMQEKTEQGKSYLDFAENLLLQKLEELEAKLLEEDSEESRNSRQKR) constitute a propeptide that is removed on maturation. 3 disulfides stabilise this stretch: Cys-75–Cys-90, Cys-82–Cys-95, and Cys-89–Cys-110.

Belongs to the neurotoxin 14 (magi-1) family. 01 (HNTX-16) subfamily. Expressed by the venom gland.

Its subcellular location is the secreted. Probable ion channel inhibitor. This Cyriopagopus hainanus (Chinese bird spider) protein is U11-theraphotoxin-Hhn1a.